We begin with the raw amino-acid sequence, 297 residues long: HTH-type transcriptional regulator ArgP (297 aa).

An HTH lysR-type domain is found at F2–T58. The segment at residues F19–K38 is a DNA-binding region (H-T-H motif).

Belongs to the LysR transcriptional regulatory family. Homodimer.

In terms of biological role, controls the transcription of genes involved in arginine and lysine metabolism. In Pseudomonas fluorescens (strain Pf0-1), this protein is HTH-type transcriptional regulator ArgP.